The chain runs to 248 residues: Methyl-coenzyme M reductase subunit gamma (248 aa).

Arginine 121 serves as a coordination point for coenzyme M.

Belongs to the methyl-coenzyme M reductase gamma subunit family. MCR is a hexamer of two alpha, two beta, and two gamma chains, forming a dimer of heterotrimers. Requires coenzyme F430 as cofactor.

The protein localises to the cytoplasm. The enzyme catalyses coenzyme B + methyl-coenzyme M = methane + coenzyme M-coenzyme B heterodisulfide. The protein operates within one-carbon metabolism; methyl-coenzyme M reduction; methane from methyl-coenzyme M: step 1/1. Functionally, component of the methyl-coenzyme M reductase (MCR) I that catalyzes the reductive cleavage of methyl-coenzyme M (CoM-S-CH3 or 2-(methylthio)ethanesulfonate) using coenzyme B (CoB or 7-mercaptoheptanoylthreonine phosphate) as reductant which results in the production of methane and the mixed heterodisulfide of CoB and CoM (CoM-S-S-CoB). This is the final step in methanogenesis. The chain is Methyl-coenzyme M reductase subunit gamma (mcrG) from Methanosarcina barkeri (strain Fusaro / DSM 804).